The chain runs to 299 residues: Small ribosomal subunit protein uS3 (299 aa).

Residues 39–107 (VREYLKAKLK…PVAVNIEEVR (69 aa)) enclose the KH type-2 domain. The interval 214 to 299 (PVIKTDERED…AVAPGDAKGE (86 aa)) is disordered. Basic and acidic residues predominate over residues 217-248 (KTDEREDDRRNRRGPRSDRPAGDRRPPSRDGA). Residues 257–282 (ADAGAAAPTDKPADGAAPAAADGPKA) are compositionally biased toward low complexity.

Belongs to the universal ribosomal protein uS3 family. As to quaternary structure, part of the 30S ribosomal subunit. Forms a tight complex with proteins S10 and S14.

Functionally, binds the lower part of the 30S subunit head. Binds mRNA in the 70S ribosome, positioning it for translation. In Methylibium petroleiphilum (strain ATCC BAA-1232 / LMG 22953 / PM1), this protein is Small ribosomal subunit protein uS3.